A 464-amino-acid chain; its full sequence is Sugar transporter ERD6-like 1 (464 aa).

12 helical membrane passes run 23-43, 72-92, 95-115, 125-145, 156-176, 180-200, 263-283, 298-318, 326-346, 359-379, 399-419, and 424-444; these read ITCG…VYGC, VMTL…AVIG, QTMW…AFAH, GFLG…IAEI, FSNQ…GNFF, TLAL…FFIP, LIIG…AISA, IGTS…MFAV, LLMS…LSYY, PILI…LGGL, LVTV…NFMM, and FGTY…VWTL.

It belongs to the major facilitator superfamily. Sugar transporter (TC 2.A.1.1) family.

The protein resides in the membrane. In terms of biological role, sugar transporter. The sequence is that of Sugar transporter ERD6-like 1 (SUGTL4) from Arabidopsis thaliana (Mouse-ear cress).